A 201-amino-acid polypeptide reads, in one-letter code: Small ribosomal subunit protein uS5 (201 aa).

The disordered stretch occupies residues M1–A27. Residues G14 to D23 are compositionally biased toward basic and acidic residues. The 64-residue stretch at Y34–V97 folds into the S5 DRBM domain.

The protein belongs to the universal ribosomal protein uS5 family. Part of the 30S ribosomal subunit. Contacts proteins S4 and S8.

Functionally, with S4 and S12 plays an important role in translational accuracy. Located at the back of the 30S subunit body where it stabilizes the conformation of the head with respect to the body. In Streptomyces avermitilis (strain ATCC 31267 / DSM 46492 / JCM 5070 / NBRC 14893 / NCIMB 12804 / NRRL 8165 / MA-4680), this protein is Small ribosomal subunit protein uS5.